A 350-amino-acid polypeptide reads, in one-letter code: B1 bradykinin receptor (350 aa).

Residues 1–41 (MASRAPLELLPLNRSQLSPPNATTCDDAPEAWDLLHRVLPS) are Extracellular-facing. N-linked (GlcNAc...) asparagine glycans are attached at residues Asn-13 and Asn-21. The helical transmembrane segment at 42–62 (VIIIICVCGLLGNLLVLAVLL) threads the bilayer. Topologically, residues 63-72 (RPRRRLNVAE) are cytoplasmic. A helical transmembrane segment spans residues 73-93 (MYLANLAASDLVFVLGLPFWA). The Extracellular portion of the chain corresponds to 94-110 (ANISNQFRWPFGGLLCR). N-linked (GlcNAc...) asparagine glycosylation is present at Asn-95. Cys-109 and Cys-186 are joined by a disulfide. The chain crosses the membrane as a helical span at residues 111 to 131 (LVNGVIKANLFISIFLVVAIS). The Cytoplasmic segment spans residues 132-150 (RDRYRALVHPMATRRRRQA). A helical transmembrane segment spans residues 151–171 (RATCVLIWVAGSLLSVPTFLF). Topologically, residues 172 to 204 (RSIEAVPELNNDSACVLLHPPGAWHVARMVELN) are extracellular. A glycan (N-linked (GlcNAc...) asparagine) is linked at Asn-182. A helical membrane pass occupies residues 205 to 225 (VLGFLLPLAAIVFFNCHILAS). Residues 226 to 248 (LRGRPEVRGARCGGPPDGRTTAL) lie on the Cytoplasmic side of the membrane. A helical membrane pass occupies residues 249–269 (ILTFVAAFLVCWTPYHFFAFL). Residues 270–292 (EFLTQVQVVRGCFWENFKDLGLQ) lie on the Extracellular side of the membrane. Residues 293-313 (YASFFAFINSCLNPVIYVFVG) form a helical membrane-spanning segment. The Cytoplasmic segment spans residues 314 to 350 (RLFRTRVWDLFKQCAPRRPPAVSWSHRKRVLQLFWQN). Residue Cys-327 is the site of S-palmitoyl cysteine attachment.

This sequence belongs to the G-protein coupled receptor 1 family. Bradykinin receptor subfamily. BDKRB1 sub-subfamily.

It localises to the cell membrane. In terms of biological role, this is a receptor for bradykinin. Could be a factor in chronic pain and inflammation. This is B1 bradykinin receptor (BDKRB1) from Canis lupus familiaris (Dog).